The chain runs to 89 residues: Small ribosomal subunit protein uS15 (89 aa).

Belongs to the universal ribosomal protein uS15 family. As to quaternary structure, part of the 30S ribosomal subunit. Forms a bridge to the 50S subunit in the 70S ribosome, contacting the 23S rRNA.

One of the primary rRNA binding proteins, it binds directly to 16S rRNA where it helps nucleate assembly of the platform of the 30S subunit by binding and bridging several RNA helices of the 16S rRNA. In terms of biological role, forms an intersubunit bridge (bridge B4) with the 23S rRNA of the 50S subunit in the ribosome. The chain is Small ribosomal subunit protein uS15 from Sodalis glossinidius (strain morsitans).